The primary structure comprises 119 residues: Large ribosomal subunit protein bL19c (119 aa).

Belongs to the bacterial ribosomal protein bL19 family.

The protein localises to the plastid. It localises to the chloroplast. This Mesostigma viride (Green alga) protein is Large ribosomal subunit protein bL19c.